The chain runs to 402 residues: UDP-N-acetylmuramoylalanine--D-glutamate ligase (402 aa).

Residue 97–103 (GTNGKTT) participates in ATP binding.

It belongs to the MurCDEF family.

The protein localises to the cytoplasm. It carries out the reaction UDP-N-acetyl-alpha-D-muramoyl-L-alanine + D-glutamate + ATP = UDP-N-acetyl-alpha-D-muramoyl-L-alanyl-D-glutamate + ADP + phosphate + H(+). It participates in cell wall biogenesis; peptidoglycan biosynthesis. In terms of biological role, cell wall formation. Catalyzes the addition of glutamate to the nucleotide precursor UDP-N-acetylmuramoyl-L-alanine (UMA). This chain is UDP-N-acetylmuramoylalanine--D-glutamate ligase, found in Campylobacter jejuni subsp. jejuni serotype O:6 (strain 81116 / NCTC 11828).